The following is a 137-amino-acid chain: Ribosomal RNA large subunit methyltransferase H (137 aa).

S-adenosyl-L-methionine contacts are provided by residues Leu56, Gly85, and Leu104 to Leu109.

The protein belongs to the RNA methyltransferase RlmH family. As to quaternary structure, homodimer.

The protein resides in the cytoplasm. It catalyses the reaction pseudouridine(1915) in 23S rRNA + S-adenosyl-L-methionine = N(3)-methylpseudouridine(1915) in 23S rRNA + S-adenosyl-L-homocysteine + H(+). In terms of biological role, specifically methylates the pseudouridine at position 1915 (m3Psi1915) in 23S rRNA. This chain is Ribosomal RNA large subunit methyltransferase H, found in Thermus thermophilus (strain ATCC 27634 / DSM 579 / HB8).